Reading from the N-terminus, the 419-residue chain is Coiled-coil domain-containing protein 85C (419 aa).

An N-acetylalanine modification is found at Ala2. Coiled coils occupy residues 22-88 and 118-159; these read ELLR…RELC and HEVA…AALA. Disordered regions lie at residues 162-268 and 307-348; these read GAAS…DPSS and HSES…AGQK. The span at 164-175 shows a compositional bias: gly residues; the sequence is ASGGGGGGGGAG. The span at 176-189 shows a compositional bias: low complexity; it reads SRSSIDSQASLSGP. Ser178 bears the Phosphoserine mark. Residues 224 to 233 are compositionally biased toward pro residues; it reads PPPLLPPGPH. A Phosphoserine modification is found at Ser246. Residues 307 to 325 are compositionally biased toward polar residues; the sequence is HSESQLASLPPSYQDSLQN. A compositionally biased stretch (pro residues) spans 329–338; it reads CPAPELPSPP.

It belongs to the CCDC85 family. May interact with ARVCF, CTNND1, CTNND2 and PKP4.

It is found in the cell junction. The protein localises to the tight junction. It localises to the adherens junction. Functionally, may play a role in cell-cell adhesion and epithelium development through its interaction with proteins of the beta-catenin family. May play an important role in cortical development, especially in the maintenance of radial glia. This is Coiled-coil domain-containing protein 85C (CCDC85C) from Homo sapiens (Human).